A 316-amino-acid chain; its full sequence is Elongation factor Ts, mitochondrial (316 aa).

A mitochondrion-targeting transit peptide spans 1–18; sequence MFARAPFVRLLSTTSRNL. The disordered stretch occupies residues 245–269; sequence EAAESVKTQEGLRSQEGHDPNADPV.

It belongs to the EF-Ts family.

Its subcellular location is the mitochondrion. Its function is as follows. Associates with the EF-Tu.GDP complex and induces the exchange of GDP to GTP. It remains bound to the aminoacyl-tRNA.EF-Tu.GTP complex up to the GTP hydrolysis stage on the ribosome. This chain is Elongation factor Ts, mitochondrial, found in Caenorhabditis elegans.